A 199-amino-acid chain; its full sequence is FMN-dependent NADH:quinone oxidoreductase 4 (199 aa).

FMN is bound by residues S10, 95–98, and 139–142; these read MYNL and SRGG.

This sequence belongs to the azoreductase type 1 family. In terms of assembly, homodimer. FMN serves as cofactor.

The enzyme catalyses 2 a quinone + NADH + H(+) = 2 a 1,4-benzosemiquinone + NAD(+). It catalyses the reaction N,N-dimethyl-1,4-phenylenediamine + anthranilate + 2 NAD(+) = 2-(4-dimethylaminophenyl)diazenylbenzoate + 2 NADH + 2 H(+). Quinone reductase that provides resistance to thiol-specific stress caused by electrophilic quinones. In terms of biological role, also exhibits azoreductase activity. Catalyzes the reductive cleavage of the azo bond in aromatic azo compounds to the corresponding amines. The protein is FMN-dependent NADH:quinone oxidoreductase 4 of Burkholderia lata (strain ATCC 17760 / DSM 23089 / LMG 22485 / NCIMB 9086 / R18194 / 383).